We begin with the raw amino-acid sequence, 337 residues long: Anthranilate phosphoribosyltransferase (337 aa).

5-phospho-alpha-D-ribose 1-diphosphate is bound by residues G80, 83–84 (GD), T88, 90–93 (NIST), 108–116 (KHGNRSVSS), and S120. Residue G80 participates in anthranilate binding. S92 provides a ligand contact to Mg(2+). Anthranilate is bound at residue N111. R166 serves as a coordination point for anthranilate. Residues D225 and E226 each contribute to the Mg(2+) site.

Belongs to the anthranilate phosphoribosyltransferase family. Homodimer. The cofactor is Mg(2+).

It carries out the reaction N-(5-phospho-beta-D-ribosyl)anthranilate + diphosphate = 5-phospho-alpha-D-ribose 1-diphosphate + anthranilate. It functions in the pathway amino-acid biosynthesis; L-tryptophan biosynthesis; L-tryptophan from chorismate: step 2/5. Functionally, catalyzes the transfer of the phosphoribosyl group of 5-phosphorylribose-1-pyrophosphate (PRPP) to anthranilate to yield N-(5'-phosphoribosyl)-anthranilate (PRA). This Syntrophobacter fumaroxidans (strain DSM 10017 / MPOB) protein is Anthranilate phosphoribosyltransferase.